The sequence spans 84 residues: Small ribosomal subunit protein bS20 (84 aa).

Belongs to the bacterial ribosomal protein bS20 family.

Its function is as follows. Binds directly to 16S ribosomal RNA. The chain is Small ribosomal subunit protein bS20 from Azobacteroides pseudotrichonymphae genomovar. CFP2.